Reading from the N-terminus, the 345-residue chain is UPF0324 membrane protein CTC_01844 (345 aa).

The next 10 membrane-spanning stretches (helical) occupy residues 7–24, 28–50, 70–87, 91–113, 120–142, 152–174, 181–203, 209–231, 261–283, and 316–338; these read YSVG…SGFI, IPYR…NPIV, LAII…VLEV, SLIV…GKLF, SGLI…SPVI, AISA…GKYF, YGLW…YAFS, FSVI…FSYI, IFPW…IIPN, and SGFA…SFLV.

This sequence belongs to the UPF0324 family.

Its subcellular location is the cell membrane. The polypeptide is UPF0324 membrane protein CTC_01844 (Clostridium tetani (strain Massachusetts / E88)).